The primary structure comprises 99 residues: C-C motif chemokine 17 (99 aa).

The N-terminal stretch at methionine 1–alanine 23 is a signal peptide. 2 disulfides stabilise this stretch: cysteine 33–cysteine 57 and cysteine 34–cysteine 73.

The protein belongs to the intercrine beta (chemokine CC) family. In terms of tissue distribution, expressed in thymus, spleen, lymph node, lung and heart.

The protein localises to the secreted. Functionally, chemokine, which displays chemotactic activity for T lymphocytes, preferentially Th2 cells, but not monocytes or granulocytes. Therefore plays an important role in a wide range of inflammatory and immunological processes. Acts by binding to CCR4 at T-cell surface. Mediates GM-CSF/CSF2-driven pain and inflammation. In the brain, required to maintain the typical, highly branched morphology of hippocampal microglia under homeostatic conditions. May be important for the appropriate adaptation of microglial morphology and synaptic plasticity to acute lipopolysaccharide (LPS)-induced neuroinflammation. Plays a role in wound healing, mainly by inducing fibroblast migration into the wound. The protein is C-C motif chemokine 17 (CCL17) of Canis lupus familiaris (Dog).